The primary structure comprises 444 residues: Phosphoglucosamine mutase (444 aa).

Residue serine 100 is the Phosphoserine intermediate of the active site. The Mg(2+) site is built by serine 100, aspartate 234, aspartate 236, and aspartate 238. Serine 100 is modified (phosphoserine).

It belongs to the phosphohexose mutase family. Requires Mg(2+) as cofactor. Post-translationally, activated by phosphorylation.

It carries out the reaction alpha-D-glucosamine 1-phosphate = D-glucosamine 6-phosphate. In terms of biological role, catalyzes the conversion of glucosamine-6-phosphate to glucosamine-1-phosphate. This chain is Phosphoglucosamine mutase, found in Rubrobacter xylanophilus (strain DSM 9941 / JCM 11954 / NBRC 16129 / PRD-1).